Reading from the N-terminus, the 259-residue chain is Imidazole glycerol phosphate synthase subunit HisF (259 aa).

Residues aspartate 11 and aspartate 130 contribute to the active site.

Belongs to the HisA/HisF family. As to quaternary structure, heterodimer of HisH and HisF.

The protein resides in the cytoplasm. It carries out the reaction 5-[(5-phospho-1-deoxy-D-ribulos-1-ylimino)methylamino]-1-(5-phospho-beta-D-ribosyl)imidazole-4-carboxamide + L-glutamine = D-erythro-1-(imidazol-4-yl)glycerol 3-phosphate + 5-amino-1-(5-phospho-beta-D-ribosyl)imidazole-4-carboxamide + L-glutamate + H(+). Its pathway is amino-acid biosynthesis; L-histidine biosynthesis; L-histidine from 5-phospho-alpha-D-ribose 1-diphosphate: step 5/9. Functionally, IGPS catalyzes the conversion of PRFAR and glutamine to IGP, AICAR and glutamate. The HisF subunit catalyzes the cyclization activity that produces IGP and AICAR from PRFAR using the ammonia provided by the HisH subunit. The chain is Imidazole glycerol phosphate synthase subunit HisF from Variovorax paradoxus (strain S110).